The primary structure comprises 1033 residues: SIT4-associating protein SAP190 (1033 aa).

Disordered stretches follow at residues 32 to 82 (DQDD…TTES), 147 to 213 (PEII…QVET), and 768 to 1033 (FGND…KEAF). A compositionally biased stretch (basic and acidic residues) spans 158–170 (ILIERDRKDKKED). A compositionally biased stretch (acidic residues) spans 171 to 182 (AEEGGDSEETTN). The segment covering 183–195 (DSDHDSGDERSVD) has biased composition (basic and acidic residues). At serine 774 the chain carries Phosphoserine. Acidic residues-rich tracts occupy residues 784–793 (SEDIIGDTEG) and 825–838 (ENEE…EYSD). Phosphoserine is present on residues serine 857, serine 862, and serine 892. Over residues 858-879 (DDGKSKSAESEFTDKISEHRDG) the composition is skewed to basic and acidic residues. The segment covering 909 to 924 (SRSQPSDPKLQDQNIF) has biased composition (polar residues). Residues 932-944 (GVGDDDDYMDPND) are compositionally biased toward acidic residues. At threonine 990 the chain carries Phosphothreonine. The residue at position 991 (serine 991) is a Phosphoserine. Positions 1000–1018 (ISSDEEDSEDEDEENDMGN) are enriched in acidic residues.

The protein belongs to the SAPS family. As to quaternary structure, associates with the SIT4 protein phosphatase catalytic subunit in a cell-cycle-dependent manner. Hyperphosphorylated in the absence of SIT4.

Its subcellular location is the cytoplasm. In terms of biological role, positive regulator of protein phosphatase SIT4. Involved in the general amino acid control (GAAC) response regulated by TOR. Involved in the dephosphorylation of the elongator complex subunit IKI3. This is SIT4-associating protein SAP190 (SAP190) from Saccharomyces cerevisiae (strain ATCC 204508 / S288c) (Baker's yeast).